The chain runs to 127 residues: Large ribosomal subunit protein mL55 (127 aa).

The N-terminal 32 residues, 1-32 (MPLAILLSLLRHCGVRAALPTPRHLHTSPWRA), are a transit peptide targeting the mitochondrion. Phosphoserine is present on Ser84.

This sequence belongs to the mitochondrion-specific ribosomal protein mL55 family. As to quaternary structure, component of the mitochondrial ribosome large subunit (39S) which comprises a 16S rRNA and about 50 distinct proteins.

The protein resides in the mitochondrion. This is Large ribosomal subunit protein mL55 (Mrpl55) from Mus musculus (Mouse).